A 189-amino-acid chain; its full sequence is Threonylcarbamoyl-AMP synthase (189 aa).

The YrdC-like domain occupies 9 to 189 (ASAQRKLSVY…IDGETGKRLR (181 aa)).

This sequence belongs to the SUA5 family. TsaC subfamily.

The protein resides in the cytoplasm. It catalyses the reaction L-threonine + hydrogencarbonate + ATP = L-threonylcarbamoyladenylate + diphosphate + H2O. In terms of biological role, required for the formation of a threonylcarbamoyl group on adenosine at position 37 (t(6)A37) in tRNAs that read codons beginning with adenine. Catalyzes the conversion of L-threonine, HCO(3)(-)/CO(2) and ATP to give threonylcarbamoyl-AMP (TC-AMP) as the acyladenylate intermediate, with the release of diphosphate. This Neisseria meningitidis serogroup C (strain 053442) protein is Threonylcarbamoyl-AMP synthase.